We begin with the raw amino-acid sequence, 214 residues long: Mexicain (214 aa).

3 disulfides stabilise this stretch: Cys22-Cys63, Cys56-Cys95, and Cys153-Cys200. Residue Cys25 is part of the active site. E64 is bound at residue Cys25. Residues His159 and Asn175 contribute to the active site.

The protein belongs to the peptidase C1 family. In terms of tissue distribution, expressed in latex.

Its subcellular location is the secreted. Its function is as follows. Cysteine protease. The polypeptide is Mexicain (Jacaratia mexicana (Wild papaya)).